The sequence spans 153 residues: Nucleoside diphosphate kinase (153 aa).

The ATP site is built by lysine 13, phenylalanine 61, arginine 89, threonine 95, arginine 106, and asparagine 116. The active-site Pros-phosphohistidine intermediate is the histidine 119.

The protein belongs to the NDK family. It depends on Mg(2+) as a cofactor. As to expression, highest levels in the liver and kidney with lower levels in the heart, brain and breast muscle.

The protein localises to the cytoplasm. Its subcellular location is the cell membrane. The catalysed reaction is a 2'-deoxyribonucleoside 5'-diphosphate + ATP = a 2'-deoxyribonucleoside 5'-triphosphate + ADP. It catalyses the reaction a ribonucleoside 5'-diphosphate + ATP = a ribonucleoside 5'-triphosphate + ADP. Functionally, major role in the synthesis of nucleoside triphosphates other than ATP. The ATP gamma phosphate is transferred to the NDP beta phosphate via a ping-pong mechanism, using a phosphorylated active-site intermediate. This chain is Nucleoside diphosphate kinase, found in Columba livia (Rock dove).